Here is a 149-residue protein sequence, read N- to C-terminus: Flagellar assembly factor FliW (149 aa).

It belongs to the FliW family. Interacts with translational regulator CsrA and flagellin(s).

It is found in the cytoplasm. Acts as an anti-CsrA protein, binds CsrA and prevents it from repressing translation of its target genes, one of which is flagellin. Binds to flagellin and participates in the assembly of the flagellum. The polypeptide is Flagellar assembly factor FliW (Thermotoga neapolitana (strain ATCC 49049 / DSM 4359 / NBRC 107923 / NS-E)).